We begin with the raw amino-acid sequence, 195 residues long: Cell division protein SepF (195 aa).

Positions 32–54 (RYSKTNSSETLAPEEEEPIRNRR) are disordered.

It belongs to the SepF family. As to quaternary structure, homodimer. Interacts with FtsZ.

It is found in the cytoplasm. In terms of biological role, cell division protein that is part of the divisome complex and is recruited early to the Z-ring. Probably stimulates Z-ring formation, perhaps through the cross-linking of FtsZ protofilaments. Its function overlaps with FtsA. This Gloeothece citriformis (strain PCC 7424) (Cyanothece sp. (strain PCC 7424)) protein is Cell division protein SepF.